The sequence spans 671 residues: MESIEQQLTELRTTLRHHEYLYHVMDAPEIPDAEYDRLMRELRELETKHPELITPDSPTQRVGAAPLAAFSQIRHEVPMLSLDNVFDEESFLAFNKRVQDRLKSNEKVTWCCELKLDGLAVSILYENGVLVSAATRGDGTTGEDITSNVRTIRAIPLKLHGENIPARLEVRGEVFLPQAGFEKINEDARRTGGKVFANPRNAAAGSLRQLDPRITAKRPLTFFCYGVGVLEGGELPDTHLGRLLQFKKWGLPVSDRVTLCESAEEVLAFYHKVEEDRPTLGFDIDGVVIKVNSLAQQEQLGFVARAPRWAVAFKFPAQEQMTFVRDVEFQVGRTGAITPVARLEPVHVAGVLVSNATLHNADEIERLGLRIGDKVVIRRAGDVIPQVVNVVLSERPEDTREVVFPTHCPVCGSDVERVEGEAVARCTGGLICGAQRKESLKHFVSRRAMDVDGMGDKIIDQLVEKEYVHTPADLFKLTAGKLTGLERMGPKSAQNVVNALEKAKETTFARFLYALGIREVGEATAAGLAAYFGTLEALEAASIEELQKVPDVGIVVASHVHNFFAEESNRNVISELLAEGVHWPEPIVINAEEIDSPFAGKTVVLTGSLSQMSRDDAKARLVELGAKVAGSVSKKTDLVIAGEAAGSKLAKAQELGIEVIDETEMLHLLGS.

Residues 32–36 (DAEYD), 81–82 (SL), and glutamate 113 contribute to the NAD(+) site. The active-site N6-AMP-lysine intermediate is the lysine 115. NAD(+)-binding residues include arginine 136, glutamate 173, lysine 290, and lysine 314. Residues cysteine 408, cysteine 411, cysteine 426, and cysteine 432 each contribute to the Zn(2+) site. The BRCT domain occupies 593-671 (EIDSPFAGKT…ETEMLHLLGS (79 aa)).

It belongs to the NAD-dependent DNA ligase family. LigA subfamily. Mg(2+) is required as a cofactor. Mn(2+) serves as cofactor.

The catalysed reaction is NAD(+) + (deoxyribonucleotide)n-3'-hydroxyl + 5'-phospho-(deoxyribonucleotide)m = (deoxyribonucleotide)n+m + AMP + beta-nicotinamide D-nucleotide.. Functionally, DNA ligase that catalyzes the formation of phosphodiester linkages between 5'-phosphoryl and 3'-hydroxyl groups in double-stranded DNA using NAD as a coenzyme and as the energy source for the reaction. It is essential for DNA replication and repair of damaged DNA. The protein is DNA ligase of Escherichia coli O6:K15:H31 (strain 536 / UPEC).